We begin with the raw amino-acid sequence, 247 residues long: Putative methyltransferase YqeM (247 aa).

It belongs to the methyltransferase superfamily.

May be a S-adenosyl-L-methionine (SAM)-dependent methyltransferase. The sequence is that of Putative methyltransferase YqeM (yqeM) from Bacillus subtilis (strain 168).